A 38-amino-acid chain; its full sequence is Very early lactation protein (38 aa).

In terms of assembly, homodimer. Post-translationally, O-glycosylated. Contains sialic acid residues. As to expression, found in the whey fraction of milk (at protein level).

The protein resides in the secreted. The protein is Very early lactation protein of Trichosurus vulpecula (Brush-tailed possum).